The primary structure comprises 314 residues: Olfactory receptor 4K2 (314 aa).

At 1–25 (MDVGNKSTMSEFVLLGLSNSWELQM) the chain is on the extracellular side. N-linked (GlcNAc...) asparagine glycosylation is present at Asn-5. The chain crosses the membrane as a helical span at residues 26–49 (FFFMVFSLLYVATMVGNSLIVITV). The Cytoplasmic portion of the chain corresponds to 50 to 57 (IVDPHLHS). A helical membrane pass occupies residues 58–79 (PMYFLLTNLSIIDMSLASFATP). Residues 80–100 (KMITDYLTGHKTISFDGCLTQ) are Extracellular-facing. A disulfide bridge connects residues Cys-97 and Cys-189. A helical transmembrane segment spans residues 101–120 (IFFLHLFTGTEIILLMAMSF). At 121 to 139 (DRYIAICKPLHYASVISPQ) the chain is on the cytoplasmic side. The helical transmembrane segment at 140–158 (VCVALVVASWIMGVMHSMS) threads the bilayer. The Extracellular portion of the chain corresponds to 159 to 195 (QVIFALTLPFCGPYEVDSFFCDLPVVFQLACVDTYVL). Residues 196 to 219 (GLFMISTSGIIALSCFIVLFNSYV) form a helical membrane-spanning segment. The Cytoplasmic segment spans residues 220–235 (IVLVTVKHHSSRGSSK). The helical transmembrane segment at 236–258 (ALSTCTAHFIVVFLFFGPCIFIY) threads the bilayer. At 259-269 (MWPLSSFLTDK) the chain is on the extracellular side. The helical transmembrane segment at 270–289 (ILSVFYTIFTPTLNPIIYTL) threads the bilayer. Topologically, residues 290 to 314 (RNQEVKIAMRKLKNRFLNFNKAMPS) are cytoplasmic.

Belongs to the G-protein coupled receptor 1 family.

The protein localises to the cell membrane. Its function is as follows. Odorant receptor. The chain is Olfactory receptor 4K2 (OR4K2) from Homo sapiens (Human).